Consider the following 324-residue polypeptide: Adenosine kinase (324 aa).

Residues Ser8, Asp12, Ser36, Gly48, Asn52, Phe102, Phe116, and 172 to 173 (QQ) contribute to the substrate site. Residues Asn195, 223–228 (TLGPKG), and Gly256 each bind ATP. Asp257 is a binding site for substrate. Asp257 serves as the catalytic Proton acceptor.

Belongs to the carbohydrate kinase PfkB family. As to quaternary structure, homodimer. Requires Mg(2+) as cofactor.

It catalyses the reaction adenosine + ATP = AMP + ADP + H(+). The enzyme catalyses adenosine + GTP = GDP + AMP + H(+). The catalysed reaction is dGTP + adenosine = dGDP + AMP + H(+). The protein operates within purine metabolism; AMP biosynthesis via salvage pathway; AMP from adenosine: step 1/1. In terms of biological role, catalyzes the phosphorylation of adenosine to adenosine monophosphate (AMP). Prefers dGTP and GTP to ATP as phosphate donors in vitro. This chain is Adenosine kinase (adoK), found in Mycobacterium bovis (strain ATCC BAA-935 / AF2122/97).